The primary structure comprises 226 residues: CRISPR-associated protein Cas5 (226 aa).

Belongs to the CRISPR-associated protein Cas5 family. Subtype I-A/Apern subfamily. Can form a Cascade complex with Csa5, Cas7, Cas3, Cas3' and Cas8a2.

Its function is as follows. CRISPR (clustered regularly interspaced short palindromic repeat) is an adaptive immune system that provides protection against mobile genetic elements (viruses, transposable elements and conjugative plasmids). CRISPR clusters contain spacers, sequences complementary to antecedent mobile elements, and target invading nucleic acids. CRISPR clusters are transcribed and processed into CRISPR RNA (crRNA). This is CRISPR-associated protein Cas5 (cas5a) from Thermoproteus tenax (strain ATCC 35583 / DSM 2078 / JCM 9277 / NBRC 100435 / Kra 1).